The primary structure comprises 356 residues: GTPase Obg (356 aa).

The 159-residue stretch at 2-160 (ESFVDEVAIE…KFLRLSLKLL (159 aa)) folds into the Obg domain. Positions 161-329 (ADVGIVGLPN…LLENMDEVFF (169 aa)) constitute an OBG-type G domain. GTP is bound by residues 167–174 (GLPNAGKS), 192–196 (FTTLS), 215–218 (DIPG), 282–285 (NKID), and 310–312 (SAD). The Mg(2+) site is built by serine 174 and threonine 194.

This sequence belongs to the TRAFAC class OBG-HflX-like GTPase superfamily. OBG GTPase family. In terms of assembly, monomer. Requires Mg(2+) as cofactor.

Its subcellular location is the cytoplasm. Its function is as follows. An essential GTPase which binds GTP, GDP and possibly (p)ppGpp with moderate affinity, with high nucleotide exchange rates and a fairly low GTP hydrolysis rate. Plays a role in control of the cell cycle, stress response, ribosome biogenesis and in those bacteria that undergo differentiation, in morphogenesis control. The chain is GTPase Obg from Leptospira interrogans serogroup Icterohaemorrhagiae serovar copenhageni (strain Fiocruz L1-130).